Consider the following 637-residue polypeptide: Early transcription factor 70 kDa subunit (637 aa).

Residues 32 to 185 (RTIIDENRSV…GHIIDLMSEE (154 aa)) enclose the Helicase ATP-binding domain. 45-52 (HIMGSGKT) contributes to the ATP binding site. A DEXH box motif is present at residues 135 to 138 (DKAH). A Helicase C-terminal domain is found at 327 to 507 (KFKYFINRIQ…VLPFDIKKLL (181 aa)).

It belongs to the helicase family. VETF subfamily. In terms of assembly, heterodimer of a 70 kDa and a 82 kDa subunit. Part of the early transcription complex composed of ETF, RAP94/OPG109, and the DNA-directed RNA polymerase.

It localises to the virion. In terms of biological role, acts with RNA polymerase to initiate transcription from early gene promoters. Is recruited by the RPO-associated protein of 94 kDa RAP94/OPG109 to form the early transcription complex, which also contains the core RNA polymerase. ETF heterodimer binds to early gene promoters. This chain is Early transcription factor 70 kDa subunit (OPG118), found in Homo sapiens (Human).